The chain runs to 88 residues: Small ribosomal subunit protein uS17 (88 aa).

The protein belongs to the universal ribosomal protein uS17 family. As to quaternary structure, part of the 30S ribosomal subunit.

One of the primary rRNA binding proteins, it binds specifically to the 5'-end of 16S ribosomal RNA. This chain is Small ribosomal subunit protein uS17, found in Ruthia magnifica subsp. Calyptogena magnifica.